A 272-amino-acid polypeptide reads, in one-letter code: Ribosomal RNA small subunit methyltransferase A (272 aa).

Positions 16, 18, 43, 64, 89, and 110 each coordinate S-adenosyl-L-methionine.

Belongs to the class I-like SAM-binding methyltransferase superfamily. rRNA adenine N(6)-methyltransferase family. RsmA subfamily.

It localises to the cytoplasm. The enzyme catalyses adenosine(1518)/adenosine(1519) in 16S rRNA + 4 S-adenosyl-L-methionine = N(6)-dimethyladenosine(1518)/N(6)-dimethyladenosine(1519) in 16S rRNA + 4 S-adenosyl-L-homocysteine + 4 H(+). Specifically dimethylates two adjacent adenosines (A1518 and A1519) in the loop of a conserved hairpin near the 3'-end of 16S rRNA in the 30S particle. May play a critical role in biogenesis of 30S subunits. The polypeptide is Ribosomal RNA small subunit methyltransferase A (Pseudomonas fluorescens (strain Pf0-1)).